The chain runs to 178 residues: Large ribosomal subunit protein uL6 (178 aa).

The protein belongs to the universal ribosomal protein uL6 family. Part of the 50S ribosomal subunit.

In terms of biological role, this protein binds to the 23S rRNA, and is important in its secondary structure. It is located near the subunit interface in the base of the L7/L12 stalk, and near the tRNA binding site of the peptidyltransferase center. The sequence is that of Large ribosomal subunit protein uL6 from Aliarcobacter butzleri (strain RM4018) (Arcobacter butzleri).